We begin with the raw amino-acid sequence, 38 residues long: Esterase-5 (38 aa).

Residues 1-38 (SAAADPLIVELPNGKVRGRDNEGYYEAEGIPRAEPPVG) form a disordered region.

It belongs to the type-B carboxylesterase/lipase family.

The enzyme catalyses a carboxylic ester + H2O = an alcohol + a carboxylate + H(+). This Drosophila mojavensis (Fruit fly) protein is Esterase-5 (Est-5).